Consider the following 30-residue polypeptide: Poly-His-poly-Gly peptide 2 (30 aa).

Over residues 1–18 (EDDHDHHHHHHHHHHHHG) the composition is skewed to basic residues. A disordered region spans residues 1-30 (EDDHDHHHHHHHHHHHHGVGGGGGGGGGGA). Gly residues predominate over residues 19 to 30 (VGGGGGGGGGGA).

In terms of tissue distribution, expressed by the venom gland.

Its subcellular location is the secreted. Functionally, may serve as a metalloproteinase inhibitor during glandular storage. Their inhibition may be instantly disengaged, by dilution or physiochemical change, when venom is injected into tissue of the victim. The polypeptide is Poly-His-poly-Gly peptide 2 (Atheris nitschei (Great lakes bush viper)).